The sequence spans 444 residues: Trigger factor (444 aa).

In terms of domain architecture, PPIase FKBP-type spans 185 to 270 (GDKLIIDFEG…VNEIQIAKDF (86 aa)).

This sequence belongs to the FKBP-type PPIase family. Tig subfamily.

The protein localises to the cytoplasm. It carries out the reaction [protein]-peptidylproline (omega=180) = [protein]-peptidylproline (omega=0). In terms of biological role, involved in protein export. Acts as a chaperone by maintaining the newly synthesized protein in an open conformation. Functions as a peptidyl-prolyl cis-trans isomerase. This is Trigger factor from Wolbachia pipientis wMel.